Here is a 321-residue protein sequence, read N- to C-terminus: uncharacterized protein (321 aa).

A compositionally biased stretch (basic residues) spans 1 to 12; sequence MSMFLKKQKKTK. Disordered regions lie at residues 1-59 and 71-289; these read MSMF…MRKT and EDCT…GPED. A compositionally biased stretch (basic and acidic residues) spans 50–59; it reads DGIKETMRKT. Over residues 99–115 the composition is skewed to acidic residues; the sequence is DDSDSESSEDGGEDDEE. Residues 156–175 are compositionally biased toward low complexity; that stretch reads SDSSSSSSSSSDSESSSSSD. Positions 179-189 are enriched in basic and acidic residues; it reads DGDRSTPEPDI. Residues 231–242 are compositionally biased toward low complexity; it reads EPSPLRAAAAAA.

This is an uncharacterized protein from Equus caballus (Horse).